Reading from the N-terminus, the 445-residue chain is Protein phosphatase 2C 53 (445 aa).

Residues 124 to 435 (LWGLESICGR…DNITVVVIDL (312 aa)) enclose the PPM-type phosphatase domain. Residues aspartate 180, glycine 181, aspartate 362, and aspartate 426 each contribute to the Mn(2+) site.

This sequence belongs to the PP2C family. Interacts with PYL10, SAPK8 and SAPK10. Binding to PYL10 is dependent on the presence of abscisic acid (ABA). Interacts with PYL3, PYL5, PYL9 and PYL10. Binding to PYL9 and PYL10 is dependent on the presence of ABA. It depends on Mg(2+) as a cofactor. Mn(2+) serves as cofactor. In terms of tissue distribution, expressed in leaf blades, leaf sheaths and lamina joints. Expressed at low levels in roots, stems, flowers and panicles.

The protein localises to the cytoplasm. The protein resides in the cytosol. It localises to the nucleus. It catalyses the reaction O-phospho-L-seryl-[protein] + H2O = L-seryl-[protein] + phosphate. The catalysed reaction is O-phospho-L-threonyl-[protein] + H2O = L-threonyl-[protein] + phosphate. With respect to regulation, repressed by abscisic acid-bound PYL1. Functionally, protein phosphatase that acts as a negative regulator of abscisic acid (ABA) signaling. Involved in the regulation of root architecture development and drought resistance. Can dephosphorylate SAPK8 and SAPK10 in vitro. Together with PYL10, SAPK8 and SAPK10, may form an ABA signaling module involved in stress response. The chain is Protein phosphatase 2C 53 from Oryza sativa subsp. japonica (Rice).